A 739-amino-acid polypeptide reads, in one-letter code: Putative apoptosis-inducing factor 1, mitochondrial (739 aa).

The N-terminal 42 residues, 1-42, are a transit peptide targeting the mitochondrion; it reads MSIWGVRCLTQRFIRQAYILANRRLLGPVPQRSPPAYAPLRP. The interval 257–564 is FAD-dependent oxidoreductase; it reads YLIIGGGTAA…ARRNLYVAGD (308 aa). FAD-binding positions include 261–265, Arg295, Lys300, Val358, Arg410, Asp564, and 580–581; these read GGGTA and HH. A disordered region spans residues 644-681; that stretch reads VDQLSESSDSDVPETSTSSSQSSKSDAGASQDGVTCDP. A compositionally biased stretch (low complexity) spans 656 to 676; sequence PETSTSSSQSSKSDAGASQDG.

Belongs to the FAD-dependent oxidoreductase family. It depends on FAD as a cofactor.

The protein resides in the mitochondrion intermembrane space. It carries out the reaction A + NADH + H(+) = AH2 + NAD(+). Probable NADH oxidoreductase. Mitochondrial effector of cell death that plays roles in developmentally regulated cell death and normal mitochondrial function. This Drosophila melanogaster (Fruit fly) protein is Putative apoptosis-inducing factor 1, mitochondrial (AIF).